A 174-amino-acid chain; its full sequence is MKKTPSPTDEETQLFRDAIKGTRKIKQDTIRADLRPVKQKRELRESREKLGVDHYFSDEYQPHLEADGPTRYVREDVSKFELKKLKRGSYPPEIYLDLHGMNQQQAKQELAALLTLCQKENIHVASVMHGIGKHILKQRIPSWLAQHPNVQAFHQAPREWGGDSAILVLLDIEE.

The 76-residue stretch at 96 to 171 (LDLHGMNQQQ…GDSAILVLLD (76 aa)) folds into the Smr domain.

This sequence belongs to the SmrB family. Associates with collided ribosomes, but not with correctly translating polysomes.

Its function is as follows. Acts as a ribosome collision sensor. Detects stalled/collided disomes (pairs of ribosomes where the leading ribosome is stalled and a second ribosome has collided with it) and endonucleolytically cleaves mRNA at the 5' boundary of the stalled ribosome. Stalled/collided disomes form a new interface (primarily via the 30S subunits) that binds SmrB. Cleaved mRNA becomes available for tmRNA ligation, leading to ribosomal subunit dissociation and rescue of stalled ribosomes. This is Ribosome rescue factor SmrB from Aeromonas hydrophila subsp. hydrophila (strain ATCC 7966 / DSM 30187 / BCRC 13018 / CCUG 14551 / JCM 1027 / KCTC 2358 / NCIMB 9240 / NCTC 8049).